A 111-amino-acid polypeptide reads, in one-letter code: Large ribosomal subunit protein uL24 (111 aa).

This sequence belongs to the universal ribosomal protein uL24 family. In terms of assembly, part of the 50S ribosomal subunit.

One of two assembly initiator proteins, it binds directly to the 5'-end of the 23S rRNA, where it nucleates assembly of the 50S subunit. Functionally, one of the proteins that surrounds the polypeptide exit tunnel on the outside of the subunit. The sequence is that of Large ribosomal subunit protein uL24 from Bifidobacterium animalis subsp. lactis (strain AD011).